Here is a 65-residue protein sequence, read N- to C-terminus: Temporin-LK1 (65 aa).

The N-terminal stretch at 1 to 22 (MFTMKKSLLLLFFLGAINLPLC) is a signal peptide. Residues 23–44 (QEERNAEEERRDGDDEGSVEVQ) constitute a propeptide that is removed on maturation. Position 63 is a phenylalanine amide (Phe-63).

Expressed by the skin glands.

Its subcellular location is the secreted. Functionally, has antimicrobial activity against Gram-positive bacteria S.aureus ATCC 2592 (MIC=2.5 uM), S.aureus ATCC 43300 (MIC=2.5 uM) and B.subtilis (MIC=15.0 uM), against Gram-negative bacteria E.coli ML-35P (MIC=30.0 uM), P.aeruginosa PA01 (MIC=2.5 uM) and P.aeruginosa ATCC 27853 (MIC=2.5 uM) and against fungus C.albicans ATCC 2002 (MIC=5.0 uM). This is Temporin-LK1 from Limnonectes kuhlii (Kuhl's Creek frog).